A 624-amino-acid polypeptide reads, in one-letter code: Serine/threonine-protein kinase ppk35 (624 aa).

The region spanning F162 to F465 is the Protein kinase domain. ATP is bound by residues L168–V176 and K191. D285 serves as the catalytic Proton acceptor. Residues K466–L548 enclose the AGC-kinase C-terminal domain. A compositionally biased stretch (basic residues) spans R545–R559. The disordered stretch occupies residues R545–K617. Basic and acidic residues predominate over residues K560–D574. The segment covering S596 to H609 has biased composition (basic residues).

It belongs to the protein kinase superfamily. Ser/Thr protein kinase family.

Its subcellular location is the cytoplasm. It localises to the nucleus. The protein resides in the nucleolus. The catalysed reaction is L-seryl-[protein] + ATP = O-phospho-L-seryl-[protein] + ADP + H(+). The enzyme catalyses L-threonyl-[protein] + ATP = O-phospho-L-threonyl-[protein] + ADP + H(+). In terms of biological role, has a role in meiosis. The chain is Serine/threonine-protein kinase ppk35 (ppk35) from Schizosaccharomyces pombe (strain 972 / ATCC 24843) (Fission yeast).